The following is a 299-amino-acid chain: MPSPSYLGRFAPSPTGPLHFGSLLAAFGSWLLARHAGGQWCVRIEDIDPPRAEPGASERQLRTLTAFGLHSDLPVIRQSERDAAYTAAINRLLETGQAFECSCSRADLAGMGGIHHACVAPLGARRAVRLRVPPQSPVGFDDALHGRVLQDVYADVGDVVLRRADGYWAYQLAVVVDDAAQGITDVVRGADLLDSTPRQMLLQRALGVPQPRYLHLPLMLDGDGRKLSKSHGAPALDDTDPLPALHAAWAGLGQRPDALPRRATVTTLLQQAVRHFSPQLLPRQRQRDRATCAYERQRD.

Residues 9–13 (RFAPS) and Glu-45 each bind L-glutamate. A 'HIGH' region motif is present at residues 12–22 (PSPTGPLHFGS). Positions 101, 103, and 118 each coordinate Zn(2+). L-glutamate-binding residues include Tyr-170 and Arg-188. The 'KMSKS' region motif lies at 226–230 (KLSKS). Lys-229 is a binding site for ATP. The tract at residues 279-299 (QLLPRQRQRDRATCAYERQRD) is disordered. Residues 285-299 (RQRDRATCAYERQRD) are compositionally biased toward basic and acidic residues.

This sequence belongs to the class-I aminoacyl-tRNA synthetase family. GluQ subfamily. Requires Zn(2+) as cofactor.

Catalyzes the tRNA-independent activation of glutamate in presence of ATP and the subsequent transfer of glutamate onto a tRNA(Asp). Glutamate is transferred on the 2-amino-5-(4,5-dihydroxy-2-cyclopenten-1-yl) moiety of the queuosine in the wobble position of the QUC anticodon. This Xanthomonas oryzae pv. oryzae (strain KACC10331 / KXO85) protein is Glutamyl-Q tRNA(Asp) synthetase.